The following is a 630-amino-acid chain: 1-deoxy-D-xylulose-5-phosphate synthase (630 aa).

Residues His72 and 113-115 (GHS) each bind thiamine diphosphate. Asp144 contributes to the Mg(2+) binding site. Thiamine diphosphate is bound by residues 145-146 (GA), Asn173, Tyr284, and Glu367. Mg(2+) is bound at residue Asn173.

The protein belongs to the transketolase family. DXPS subfamily. As to quaternary structure, homodimer. Requires Mg(2+) as cofactor. Thiamine diphosphate is required as a cofactor.

The catalysed reaction is D-glyceraldehyde 3-phosphate + pyruvate + H(+) = 1-deoxy-D-xylulose 5-phosphate + CO2. It participates in metabolic intermediate biosynthesis; 1-deoxy-D-xylulose 5-phosphate biosynthesis; 1-deoxy-D-xylulose 5-phosphate from D-glyceraldehyde 3-phosphate and pyruvate: step 1/1. In terms of biological role, catalyzes the acyloin condensation reaction between C atoms 2 and 3 of pyruvate and glyceraldehyde 3-phosphate to yield 1-deoxy-D-xylulose-5-phosphate (DXP). The chain is 1-deoxy-D-xylulose-5-phosphate synthase from Bacillus cytotoxicus (strain DSM 22905 / CIP 110041 / 391-98 / NVH 391-98).